Here is a 290-residue protein sequence, read N- to C-terminus: Protease HtpX homolog (290 aa).

The next 2 helical transmembrane spans lie at 4-24 (ILLFVLTNVMVVAVLGIVASL) and 39-59 (TALLGFALVMGFGGAIISLLI). Position 144 (His-144) interacts with Zn(2+). Glu-145 is an active-site residue. His-148 lines the Zn(2+) pocket. Transmembrane regions (helical) follow at residues 159 to 179 (LIQGVMNTFVVFLSRVIGYAV) and 199 to 219 (VSTIVLDIVLGFAAAIVVAWF). Residue Glu-224 coordinates Zn(2+).

Belongs to the peptidase M48B family. It depends on Zn(2+) as a cofactor.

It is found in the cell inner membrane. This Variovorax paradoxus (strain S110) protein is Protease HtpX homolog.